An 854-amino-acid chain; its full sequence is MKKENQVNLGRRQLLKSTAAGTVLTGIGGTLSFTPIVEGIAAELPAPLRRTGVGEWLATTCQGCTSWCAKQIYVMDGRALKVRGNPNSGVHGMSSCPRQHLSLQQVYDPDRLRTPMMRTNPKKGRDQDPKFVPISWDKALDMLADKIIALRVANEPHKYALLRGRYSHINDLLYKKMTNLIGSPNNISHSSVCAEAHKMGPYYLDGNWGYNQYDVKNAKFILSFGADPIASNRQVSFYSQTWGDSLDHAKVVVVDPRLSASAAKAHKWIPIEPGQDSVLALAIAHVALVEGVWHKPFVGDFIEGKNLFKAGKTVSVESFKETHTYGLVEWWNQALKDYTPEWASKITGIDPKTIIAIAKDMGAAAPAVQVWTSRGAVMQARGTYTSISCHALNGLFGGIDSKGGLFPGNKTPLLKEYPEAKAYMDEIAAKGVKKEKIDQRGRLEFPALAKGKSGGGVITANAANGIRNQDPYEIKVMLAYFNNFNFSNPEGQRWDEALSKVDFMAHITTNVSEFSWFADVLLPSSHHMFEKWGVLDSIGNGVAQISIQQPSIKRLWDTRIDESEIPYMLAKKLADKGFDAPWRYINEQIVDPETGKPAADEAEFAKLMVRYLTAPLWKEDASKYGDKLSSWDEFVQKGVWNSSPYKLEARWGKFKTETTKFEFYSKTLEKALQSHADKHKVSIDEVMKACDYQARGHLAFIPHYEEPYRFGDESEFPLLLVDQKSRLNKEGRTANSPWYYEFKDVDPGDVANEDVAKFNPIDGKKFGLKDGDEIRITSPVGMLTCKAKLWEGVRPGTVAKCFGQGHWAYGRYASAKFGVTPRGGSNNDLIADRYDRLSGASAFYGHIRVRVEKV.

A signal peptide (tat-type signal) is located at residues 1-41; that stretch reads MKKENQVNLGRRQLLKSTAAGTVLTGIGGTLSFTPIVEGIA. One can recognise a 4Fe-4S Mo/W bis-MGD-type domain in the interval 54-110; it reads GEWLATTCQGCTSWCAKQIYVMDGRALKVRGNPNSGVHGMSSCPRQHLSLQQVYDPD. Residues C61, C64, C68, and C96 each contribute to the [4Fe-4S] cluster site. Residue R165 participates in arsenite binding. Position 166 (Y166) interacts with arsenate. An arsenite-binding site is contributed by H189. An arsenate-binding site is contributed by S190. C193 provides a ligand contact to Mo-bis(molybdopterin guanine dinucleotide). Residue K198 coordinates arsenate. Y210 contributes to the arsenite binding site.

This sequence belongs to the prokaryotic molybdopterin-containing oxidoreductase family. Heterodimer composed of one large subunit (ArrA) and one small subunit (ArrB). [4Fe-4S] cluster is required as a cofactor. It depends on Mo-bis(molybdopterin guanine dinucleotide) as a cofactor. Predicted to be exported by the Tat system. The position of the signal peptide cleavage has not been experimentally proven.

It is found in the periplasm. It catalyses the reaction arsenite + A + H2O = arsenate + AH2 + H(+). With respect to regulation, phosphate is a competitive inhibitor. Its function is as follows. Component of the arsenate respiratory reductase (Arr) complex, which catalyzes the reduction of arsenate (As(V)) to arsenite (As(III)). ArrA is the arsenate-binding subunit. The periplasmic localization of this complex may allow the cell to couple arsenate reduction to energy production before arsenate can be transported to the cell cytoplasm and enter the ars detoxification pathway, an energy-requiring process. The polypeptide is Arsenate respiratory reductase molybdopterin-containing subunit ArrA (Shewanella sp. (strain ANA-3)).